The following is a 107-amino-acid chain: Large ribosomal subunit protein P1 (107 aa).

Residues 68–82 (PATAGAPAAAGAAAP) are compositionally biased toward low complexity. The disordered stretch occupies residues 68 to 107 (PATAGAPAAAGAAAPAEEKKEEKEEEKEESDEDMGFGLFD). Acidic residues predominate over residues 90-101 (KEEEKEESDEDM).

This sequence belongs to the eukaryotic ribosomal protein P1/P2 family. In terms of assembly, P1 and P2 exist as dimers at the large ribosomal subunit.

The protein localises to the cytoplasm. Its function is as follows. Plays an important role in the elongation step of protein synthesis. The protein is Large ribosomal subunit protein P1 of Penicillium brevicompactum.